A 247-amino-acid chain; its full sequence is tRNA uridine(34) hydroxylase (247 aa).

A Rhodanese domain is found at 124–218 (TQQDVIVIDT…YLEDTQNKNN (95 aa)). Cysteine 178 functions as the Cysteine persulfide intermediate in the catalytic mechanism.

The protein belongs to the TrhO family.

The enzyme catalyses uridine(34) in tRNA + AH2 + O2 = 5-hydroxyuridine(34) in tRNA + A + H2O. Catalyzes oxygen-dependent 5-hydroxyuridine (ho5U) modification at position 34 in tRNAs. The sequence is that of tRNA uridine(34) hydroxylase from Rickettsia conorii (strain ATCC VR-613 / Malish 7).